A 190-amino-acid polypeptide reads, in one-letter code: Peptidyl-tRNA hydrolase (190 aa).

Tyr14 contacts tRNA. Residue His19 is the Proton acceptor of the active site. Residues Tyr64 and Asn66 each coordinate tRNA.

Belongs to the PTH family. As to quaternary structure, monomer.

Its subcellular location is the cytoplasm. The enzyme catalyses an N-acyl-L-alpha-aminoacyl-tRNA + H2O = an N-acyl-L-amino acid + a tRNA + H(+). Its function is as follows. Hydrolyzes ribosome-free peptidyl-tRNAs (with 1 or more amino acids incorporated), which drop off the ribosome during protein synthesis, or as a result of ribosome stalling. Catalyzes the release of premature peptidyl moieties from peptidyl-tRNA molecules trapped in stalled 50S ribosomal subunits, and thus maintains levels of free tRNAs and 50S ribosomes. The chain is Peptidyl-tRNA hydrolase from Rhodopirellula baltica (strain DSM 10527 / NCIMB 13988 / SH1).